Reading from the N-terminus, the 185-residue chain is Elongation factor P (185 aa).

This sequence belongs to the elongation factor P family.

It localises to the cytoplasm. It functions in the pathway protein biosynthesis; polypeptide chain elongation. In terms of biological role, involved in peptide bond synthesis. Stimulates efficient translation and peptide-bond synthesis on native or reconstituted 70S ribosomes in vitro. Probably functions indirectly by altering the affinity of the ribosome for aminoacyl-tRNA, thus increasing their reactivity as acceptors for peptidyl transferase. The sequence is that of Elongation factor P from Caldanaerobacter subterraneus subsp. tengcongensis (strain DSM 15242 / JCM 11007 / NBRC 100824 / MB4) (Thermoanaerobacter tengcongensis).